The following is a 98-amino-acid chain: Omega-hexatoxin-Hr2b (98 aa).

The signal sequence occupies residues 1-22; it reads MKFSKLSLTLALILTQVLFVLC. Residues 24 to 56 constitute a propeptide that is removed on maturation; it reads KINEDFMKHGLESQALHDEIRKPIDSENPDTER. 3 disulfides stabilise this stretch: cysteine 60-cysteine 74, cysteine 67-cysteine 80, and cysteine 73-cysteine 85. A Leucine amide modification is found at leucine 97.

The protein belongs to the neurotoxin 15 family. 02 (omega-actx) subfamily. As to expression, expressed by the venom gland.

The protein resides in the secreted. Potent inhibitor of insect, but not mammalian, voltage-gated calcium channels (Cav). In Atrax robustus (Sydney funnel-web spider), this protein is Omega-hexatoxin-Hr2b.